Consider the following 357-residue polypeptide: Probable RNA methyltransferase Daro_1157 (357 aa).

Glutamate 91 serves as the catalytic Proton acceptor. Residues 94 to 320 (LLPRDGLCIS…TTVRNSAGQD (227 aa)) form the Radical SAM core domain. A disulfide bridge connects residues cysteine 101 and cysteine 325. [4Fe-4S] cluster-binding residues include cysteine 108, cysteine 112, and cysteine 115. S-adenosyl-L-methionine is bound by residues 153 to 154 (GE), serine 183, 206 to 208 (SLH), and asparagine 282. Cysteine 325 (S-methylcysteine intermediate) is an active-site residue.

The protein belongs to the radical SAM superfamily. RlmN family. The cofactor is [4Fe-4S] cluster.

The protein resides in the cytoplasm. The chain is Probable RNA methyltransferase Daro_1157 from Dechloromonas aromatica (strain RCB).